Here is a 177-residue protein sequence, read N- to C-terminus: MIKSTGALLLFAALSAGQAMASDVAFRGNLLDRPCHVSGDSLNKHVVFKTRASRDFWYPPGRSPTESFVIRLENCHATAVGKIVTLTFKGTEEALPGHLKVTGVNSGRLAIALLDTDGSSLLKPGASHNKGQGEKVTGNSLELPFGAYVVATPEALRTKSVVPGDYEATATFELTYR.

Residues 1–21 form the signal peptide; sequence MIKSTGALLLFAALSAGQAMA.

The protein localises to the fimbrium. This chain is Protein PrsK (prsK), found in Escherichia coli.